Reading from the N-terminus, the 2159-residue chain is ATP-binding cassette sub-family A member 7 (2159 aa).

A helical transmembrane segment spans residues 22–42 (PIQLLVELLWPLFLFFILVAV). The Extracellular portion of the chain corresponds to 43–546 (RHSHPPLEHH…DVFLRVLSRS (504 aa)). A disulfide bridge connects residues Cys-75 and Cys-222. Residue Asn-309 is glycosylated (N-linked (GlcNAc...) asparagine). The next 6 helical transmembrane spans lie at 547 to 567 (LPLF…KAVV), 590 to 610 (LGWF…LVLV), 623 to 643 (VVIF…SFLL), 652 to 672 (LAAA…VLCV), 678 to 698 (LHLG…GFGC), and 732 to 752 (AFLL…EAVC). The region spanning 804–1035 (VSIRGLKKHF…LGCGYYLTLV (232 aa)) is the ABC transporter 1 domain. 838-845 (GHNGAGKT) is a binding site for ATP. Residues 846-866 (TTLSILSGLFPPSSGSASILG) traverse the membrane as a helical segment. Disordered stretches follow at residues 1042–1088 (VTHD…GAVP) and 1172–1192 (GGDS…PTGP). The span at 1044 to 1061 (HDAKGDSEDPRREKKSDG) shows a compositional bias: basic and acidic residues. The span at 1062 to 1081 (NGRTSDTAFTRGTSDKSNQA) shows a compositional bias: polar residues. A helical transmembrane segment spans residues 1246-1266 (VVLPALFVGLALFFSLIVPPF). Topologically, residues 1267–1551 (GQYPPLQLSP…TLIASSVDVL (285 aa)) are extracellular. Cys-1359 and Cys-1373 are disulfide-bonded. The next 5 helical transmembrane spans lie at 1552 to 1572 (VSIC…LVLI), 1598 to 1618 (FLWD…IFLA), 1635 to 1655 (LLLL…SFFF), 1663 to 1683 (VVLT…TFVL), and 1743 to 1763 (IIGK…LITL). An ABC transporter 2 domain is found at 1807–2039 (LVLRDLTKVY…FGAGHTLTLR (233 aa)). 1841–1848 (GVNGAGKT) provides a ligand contact to ATP. The tract at residues 2118–2159 (QGEEEESSRQEAEEEEVSKPGRQHPKRVSRFLEDPSSVETMI) is disordered. Residues 2119–2133 (GEEEESSRQEAEEEE) are compositionally biased toward acidic residues.

The protein belongs to the ABC transporter superfamily. ABCA family. Post-translationally, N-glycosylated. As to expression, widely expressed with higher expression in brain, lung, adrenal gland, spleen and hematopoietic tissues (at protein level). In the brain, expressed in cortex, cerebellum, hippocampus, olfactory bulb, neurons, astrocytes and microglia (at protein level). Also expressed in adipocytes and macrophages (at protein level). Expressed in thymocytes (at protein level). Highly expressed in spleen and hematopoietic tissues. Expressed in brain, lung, macrophages, microglia, oligodendrocytes and neurons.

It localises to the cell membrane. The protein resides in the golgi apparatus membrane. The protein localises to the early endosome membrane. Its subcellular location is the cytoplasm. It is found in the cell projection. It localises to the ruffle membrane. The protein resides in the phagocytic cup. Probable ATP-binding cassette (ABC) transporter that plays a role in lipid homeostasis and macrophage-mediated phagocytosis. Binds APOA1 and may function in apolipoprotein-mediated phospholipid efflux from cells. May also mediate cholesterol efflux. May regulate cellular ceramide homeostasis during keratinocyte differentiation. Involved in lipid raft organization and CD1D localization on thymocytes and antigen-presenting cells, which plays an important role in natural killer T-cell development and activation. Plays a role in phagocytosis of apoptotic cells by macrophages. Macrophage phagocytosis is stimulated by APOA1 or APOA2, probably by stabilization of ABCA7. Also involved in phagocytic clearance of amyloid-beta by microglia cells and macrophages. Further limits amyloid-beta production by playing a role in the regulation of amyloid-beta A4 precursor protein (APP) endocytosis and/or processing. The polypeptide is ATP-binding cassette sub-family A member 7 (Abca7) (Mus musculus (Mouse)).